A 791-amino-acid chain; its full sequence is uncharacterized protein (791 aa).

Helical transmembrane passes span 104-124 (MWIL…FFLM), 131-151 (IAAI…YYII), 177-197 (ACLY…TLII), and 226-246 (WSGL…PSVL). N-linked (GlcNAc...) asparagine glycosylation occurs at Asn265. 8 helical membrane passes run 274–294 (FFIV…IFPA), 309–329 (SAVL…PLTL), 346–366 (WATC…LPGL), 421–441 (FIIN…SFFL), 471–491 (VHWG…FAFT), 501–521 (SYGF…LSLI), 533–553 (AFFE…LLYF), and 583–603 (LVAA…SAVT). Residue Asn621 is glycosylated (N-linked (GlcNAc...) asparagine). 3 helical membrane passes run 653–673 (FVMW…LLQI), 697–717 (SVTG…NYLI), and 733–753 (AAAM…CVVY). Residue Asn759 is glycosylated (N-linked (GlcNAc...) asparagine).

Belongs to the oligopeptide OPT transporter family.

Its subcellular location is the membrane. This is an uncharacterized protein from Schizosaccharomyces pombe (strain 972 / ATCC 24843) (Fission yeast).